Reading from the N-terminus, the 110-residue chain is Protein YcgL (110 aa).

One can recognise a YcgL domain in the interval 14–98 (MFCVIYRSSK…PPEDLLKQHL (85 aa)). The segment at 88 to 110 (PPPEDLLKQHLSSVGQNTSHADR) is disordered. The segment covering 97–110 (HLSSVGQNTSHADR) has biased composition (polar residues).

This Salmonella schwarzengrund (strain CVM19633) protein is Protein YcgL.